The primary structure comprises 231 residues: Lipoprotein-releasing system ATP-binding protein LolD (231 aa).

The 221-residue stretch at 11–231 (LQAEHLGKVY…HMENGRLQPD (221 aa)) folds into the ABC transporter domain. ATP is bound at residue 47 to 54 (GASGSGKS).

The protein belongs to the ABC transporter superfamily. Lipoprotein translocase (TC 3.A.1.125) family. The complex is composed of two ATP-binding proteins (LolD) and two transmembrane proteins (LolC and LolE).

It localises to the cell inner membrane. In terms of biological role, part of the ABC transporter complex LolCDE involved in the translocation of mature outer membrane-directed lipoproteins, from the inner membrane to the periplasmic chaperone, LolA. Responsible for the formation of the LolA-lipoprotein complex in an ATP-dependent manner. The sequence is that of Lipoprotein-releasing system ATP-binding protein LolD from Bordetella bronchiseptica (strain ATCC BAA-588 / NCTC 13252 / RB50) (Alcaligenes bronchisepticus).